The chain runs to 209 residues: Small ribosomal subunit protein uS3 (209 aa).

Residues 38–107 (IRKFIKNRYY…RVVINIEEIK (70 aa)) enclose the KH type-2 domain.

It belongs to the universal ribosomal protein uS3 family. Part of the 30S ribosomal subunit. Forms a tight complex with proteins S10 and S14.

Its function is as follows. Binds the lower part of the 30S subunit head. Binds mRNA in the 70S ribosome, positioning it for translation. This is Small ribosomal subunit protein uS3 from Thermotoga petrophila (strain ATCC BAA-488 / DSM 13995 / JCM 10881 / RKU-1).